We begin with the raw amino-acid sequence, 121 residues long: Small ribosomal subunit protein uS13 (121 aa).

A disordered region spans residues 93-121 (RGLPMRGQRTRTNARTRKGPRKAAQSLKK).

The protein belongs to the universal ribosomal protein uS13 family. Part of the 30S ribosomal subunit. Forms a loose heterodimer with protein S19. Forms two bridges to the 50S subunit in the 70S ribosome.

Its function is as follows. Located at the top of the head of the 30S subunit, it contacts several helices of the 16S rRNA. In the 70S ribosome it contacts the 23S rRNA (bridge B1a) and protein L5 of the 50S subunit (bridge B1b), connecting the 2 subunits; these bridges are implicated in subunit movement. Contacts the tRNAs in the A and P-sites. This is Small ribosomal subunit protein uS13 from Albidiferax ferrireducens (strain ATCC BAA-621 / DSM 15236 / T118) (Rhodoferax ferrireducens).